The primary structure comprises 316 residues: Tyrosine recombinase XerD (316 aa).

Residues A4–V97 form the Core-binding (CB) domain. One can recognise a Tyr recombinase domain in the interval R118 to A309. Active-site residues include R162, K186, H261, R264, and H287. The O-(3'-phospho-DNA)-tyrosine intermediate role is filled by Y296.

This sequence belongs to the 'phage' integrase family. XerD subfamily. In terms of assembly, forms a cyclic heterotetrameric complex composed of two molecules of XerC and two molecules of XerD.

The protein resides in the cytoplasm. Site-specific tyrosine recombinase, which acts by catalyzing the cutting and rejoining of the recombining DNA molecules. The XerC-XerD complex is essential to convert dimers of the bacterial chromosome into monomers to permit their segregation at cell division. It also contributes to the segregational stability of plasmids. This Mycobacterium leprae (strain TN) protein is Tyrosine recombinase XerD.